Consider the following 344-residue polypeptide: tRNA N6-adenosine threonylcarbamoyltransferase (344 aa).

Fe cation contacts are provided by histidine 112 and histidine 116. Residues 134–138 (LASGG), aspartate 167, glycine 180, and asparagine 280 contribute to the substrate site. Position 308 (aspartate 308) interacts with Fe cation.

Belongs to the KAE1 / TsaD family. It depends on Fe(2+) as a cofactor.

Its subcellular location is the cytoplasm. It carries out the reaction L-threonylcarbamoyladenylate + adenosine(37) in tRNA = N(6)-L-threonylcarbamoyladenosine(37) in tRNA + AMP + H(+). In terms of biological role, required for the formation of a threonylcarbamoyl group on adenosine at position 37 (t(6)A37) in tRNAs that read codons beginning with adenine. Is involved in the transfer of the threonylcarbamoyl moiety of threonylcarbamoyl-AMP (TC-AMP) to the N6 group of A37, together with TsaE and TsaB. TsaD likely plays a direct catalytic role in this reaction. This chain is tRNA N6-adenosine threonylcarbamoyltransferase, found in Rickettsia massiliae (strain Mtu5).